Reading from the N-terminus, the 53-residue chain is Bowman-Birk type proteinase inhibitor 1 (53 aa).

5 disulfide bridges follow: Cys9–Cys24, Cys12–Cys51, Cys14–Cys22, Cys31–Cys38, and Cys40–Cys48.

Dimer.

Its function is as follows. Inhibits trypsin (IC(50)=6.20 nM), neutrophil elastase (ELANE) and, to a lesser extent, alpha-chymotrypsin (IC(50)=3.44 uM). The polypeptide is Bowman-Birk type proteinase inhibitor 1 (Lathyrus sativus (White vetchling)).